The chain runs to 350 residues: Ion-translocating oxidoreductase complex subunit D (350 aa).

5 helical membrane passes run 19-39 (LMLLVILACLPGFLAQSWFFG), 41-61 (GTLIQILLALVTALGSEALVL), 67-87 (PVKPALLDGSAALTAVLIGLS), 88-108 (LPPLLPWWMLVLGTAFAIIIA), and 122-142 (PAMVAYVLLLVSFPVQMTSWL). The residue at position 186 (threonine 186) is an FMN phosphoryl threonine. Transmembrane regions (helical) follow at residues 213-233 (WGGIGWSWVNLGYLLGGLFLL), 242-262 (IPGAILGSLLLAATLGYLMTP), 264-284 (ATATPMFHLFSGATMLGAFFI), and 299-316 (LVYGVLIGVLVYVIRRFG).

This sequence belongs to the NqrB/RnfD family. The complex is composed of six subunits: RnfA, RnfB, RnfC, RnfD, RnfE and RnfG. FMN is required as a cofactor.

It is found in the cell inner membrane. Part of a membrane-bound complex that couples electron transfer with translocation of ions across the membrane. The sequence is that of Ion-translocating oxidoreductase complex subunit D from Aeromonas hydrophila subsp. hydrophila (strain ATCC 7966 / DSM 30187 / BCRC 13018 / CCUG 14551 / JCM 1027 / KCTC 2358 / NCIMB 9240 / NCTC 8049).